A 396-amino-acid chain; its full sequence is Putative nickel insertion protein (396 aa).

The protein belongs to the LarC family.

This is Putative nickel insertion protein from Wolinella succinogenes (strain ATCC 29543 / DSM 1740 / CCUG 13145 / JCM 31913 / LMG 7466 / NCTC 11488 / FDC 602W) (Vibrio succinogenes).